We begin with the raw amino-acid sequence, 660 residues long: Glycogen debranching enzyme (660 aa).

The active-site Nucleophile is the Asp-338. Glu-373 acts as the Proton donor in catalysis. The span at 460–472 (NEANGEDNRDGAW) shows a compositional bias: basic and acidic residues. Residues 460 to 482 (NEANGEDNRDGAWENHSNNHGYE) form a disordered region.

Belongs to the glycosyl hydrolase 13 family.

The catalysed reaction is Hydrolysis of (1-&gt;6)-alpha-D-glucosidic linkages to branches with degrees of polymerization of three or four glucose residues in limit dextrin.. It functions in the pathway glycan degradation; glycogen degradation. In terms of biological role, removes maltotriose and maltotetraose chains that are attached by 1,6-alpha-linkage to the limit dextrin main chain, generating a debranched limit dextrin. In Cronobacter sakazakii (strain ATCC BAA-894) (Enterobacter sakazakii), this protein is Glycogen debranching enzyme.